Here is a 95-residue protein sequence, read N- to C-terminus: UPF0358 protein BCG9842_B1188 (95 aa).

It belongs to the UPF0358 family.

The sequence is that of UPF0358 protein BCG9842_B1188 from Bacillus cereus (strain G9842).